A 453-amino-acid chain; its full sequence is Adenosylmethionine-8-amino-7-oxononanoate aminotransferase (453 aa).

118-119 lines the pyridoxal 5'-phosphate pocket; sequence GS. Residue tyrosine 151 participates in substrate binding. Aspartate 258 serves as a coordination point for pyridoxal 5'-phosphate. Residues lysine 287, glycine 322, and arginine 417 each contribute to the substrate site. Lysine 287 bears the N6-(pyridoxal phosphate)lysine mark.

It belongs to the class-III pyridoxal-phosphate-dependent aminotransferase family. BioA subfamily. In terms of assembly, homodimer. The cofactor is pyridoxal 5'-phosphate.

It localises to the cytoplasm. The catalysed reaction is (8S)-8-amino-7-oxononanoate + S-adenosyl-L-methionine = S-adenosyl-4-methylsulfanyl-2-oxobutanoate + (7R,8S)-7,8-diammoniononanoate. Its pathway is cofactor biosynthesis; biotin biosynthesis; 7,8-diaminononanoate from 8-amino-7-oxononanoate (SAM route): step 1/1. In terms of biological role, catalyzes the transfer of the alpha-amino group from S-adenosyl-L-methionine (SAM) to 7-keto-8-aminopelargonic acid (KAPA) to form 7,8-diaminopelargonic acid (DAPA). It is the only aminotransferase known to utilize SAM as an amino donor. This is Adenosylmethionine-8-amino-7-oxononanoate aminotransferase from Geobacter sulfurreducens (strain ATCC 51573 / DSM 12127 / PCA).